The primary structure comprises 129 residues: Capsid protein (129 aa).

The viral RNA-binding stretch occupies residues 31–104; sequence EWISSNSRSQ…FATNSDCELI (74 aa).

This sequence belongs to the Leviviricetes capsid protein family. As to quaternary structure, homodimer. The capsid proteins form dimers that assemble by group of 5. Twelve such pentamers are linked together with free dimers. The homodimers binds to the viral RNA via an operator hairpin, but also to many other RNA sequences in the viral genome; this interaction probably shifts the virus from the replicative to the assembly phase and ensures specific encapsidation of the viral genome.

Its subcellular location is the virion. In terms of biological role, capsid protein self-assembles to form an icosahedral capsid with a T=3 symmetry, about 26 nm in diameter, and consisting of 89 capsid proteins dimers (178 capsid proteins). Involved in viral genome encapsidation through the interaction between a capsid protein dimer and the multiple packaging signals present in the RNA genome. The capsid also contains 1 copy of the A2 maturation protein. Its function is as follows. Acts as a translational repressor of viral replicase synthesis late in infection. This latter function is the result of capsid protein interaction with an RNA hairpin which contains the replicase ribosome-binding site. This chain is Capsid protein, found in Enterobacteria phage f2 (Bacteriophage f2).